A 59-amino-acid chain; its full sequence is Large ribosomal subunit protein bL32 (59 aa).

Residues 1 to 16 show a composition bias toward basic residues; that stretch reads MAVPKRKTSPSKRGMR. The disordered stretch occupies residues 1–59; sequence MAVPKRKTSPSKRGMRRSADALKAPTYIEDKNSGELRRPHHIDLKTGMYRGRSVLPPKD. Residues 28-44 show a composition bias toward basic and acidic residues; that stretch reads IEDKNSGELRRPHHIDL.

Belongs to the bacterial ribosomal protein bL32 family.

The polypeptide is Large ribosomal subunit protein bL32 (Bartonella quintana (strain Toulouse) (Rochalimaea quintana)).